Here is a 961-residue protein sequence, read N- to C-terminus: Outer capsid protein VP2 (961 aa).

It belongs to the orbivirus VP2 family.

It localises to the virion. Its function is as follows. The VP2 protein is one of the two proteins (with VP5) target of the host immunogenic response. Responsible for viral which constitute the virus particle outer capsid. It is the major attachment to target host cell, probably by binding to sialic acid. This attachment induces virion internalization predominantly through clathrin-dependent endocytosis. This Bluetongue virus 1 (isolate South Africa) (BTV 1) protein is Outer capsid protein VP2 (Segment-2).